Here is a 322-residue protein sequence, read N- to C-terminus: Ferrochelatase (322 aa).

Histidine 195 and glutamate 276 together coordinate Fe cation.

Belongs to the ferrochelatase family.

The protein resides in the cytoplasm. It catalyses the reaction heme b + 2 H(+) = protoporphyrin IX + Fe(2+). It participates in porphyrin-containing compound metabolism; protoheme biosynthesis; protoheme from protoporphyrin-IX: step 1/1. Catalyzes the ferrous insertion into protoporphyrin IX. This Edwardsiella ictaluri (strain 93-146) protein is Ferrochelatase.